The sequence spans 51 residues: Small integral membrane protein 38 (51 aa).

The helical transmembrane segment at 13 to 33 threads the bilayer; the sequence is PLLALLVVILLARLILWSCLG.

Its subcellular location is the membrane. The sequence is that of Small integral membrane protein 38 from Homo sapiens (Human).